We begin with the raw amino-acid sequence, 450 residues long: MREIISIHIGQAGIQVGNACWELYCLEHGIEPDGTMPSDTSVGVAHDAFNTFFSETGSGKHVPRAIFVDLEPTVIDEVRTGSYRQLFHPEQLISGKEDAANNFARGHYTVGKEIVDLCLDRVRKLADNCTGLQGFLVFNAVGGGTGSGLGSLLLERLSVDYGKKSKLGFTIYPSPQVSTAVVEPYNSVLSTHSLLEHTDVAVLLDNEAIYDICRRSLDIERPTYTNLNRLISQIISSLTTSLRFDGAINVDVTEFQTNLVPYPRIHFMLSSYAPVISAEKAYHEQLSVPEITNAVFEPSSMMAKCDPRHGKYMACCLMYRGDVVPKDVNAAVATIKTKRTVQFVDWCPTGFKCGINYQPPSVVPGGDLAKVQRAVCMISNNTAVAEVFSRIDHKFDLMYAKRAFVHWYVGEGMEEGEFSEAREDLAALEKDYEEVGAEGADDEGDEGEDY.

GTP-binding residues include Gln-11, Glu-71, Gly-144, Thr-145, Thr-179, Asn-206, and Asn-228. Residue Glu-71 coordinates Mg(2+). The active site involves Glu-254.

The protein belongs to the tubulin family. Dimer of alpha and beta chains. A typical microtubule is a hollow water-filled tube with an outer diameter of 25 nm and an inner diameter of 15 nM. Alpha-beta heterodimers associate head-to-tail to form protofilaments running lengthwise along the microtubule wall with the beta-tubulin subunit facing the microtubule plus end conferring a structural polarity. Microtubules usually have 13 protofilaments but different protofilament numbers can be found in some organisms and specialized cells. Requires Mg(2+) as cofactor. Undergoes a tyrosination/detyrosination cycle, the cyclic removal and re-addition of a C-terminal tyrosine residue by the enzymes tubulin tyrosine carboxypeptidase (TTCP) and tubulin tyrosine ligase (TTL), respectively.

The protein resides in the cytoplasm. It localises to the cytoskeleton. It carries out the reaction GTP + H2O = GDP + phosphate + H(+). Functionally, tubulin is the major constituent of microtubules, a cylinder consisting of laterally associated linear protofilaments composed of alpha- and beta-tubulin heterodimers. Microtubules grow by the addition of GTP-tubulin dimers to the microtubule end, where a stabilizing cap forms. Below the cap, tubulin dimers are in GDP-bound state, owing to GTPase activity of alpha-tubulin. This Eleusine indica (Goosegrass) protein is Tubulin alpha-3 chain (TUBA3).